We begin with the raw amino-acid sequence, 344 residues long: Phosphate acyltransferase (344 aa).

Belongs to the PlsX family. As to quaternary structure, homodimer. Probably interacts with PlsY.

It is found in the cytoplasm. The enzyme catalyses a fatty acyl-[ACP] + phosphate = an acyl phosphate + holo-[ACP]. Its pathway is lipid metabolism; phospholipid metabolism. In terms of biological role, catalyzes the reversible formation of acyl-phosphate (acyl-PO(4)) from acyl-[acyl-carrier-protein] (acyl-ACP). This enzyme utilizes acyl-ACP as fatty acyl donor, but not acyl-CoA. This Actinobacillus pleuropneumoniae serotype 5b (strain L20) protein is Phosphate acyltransferase.